The primary structure comprises 87 residues: Large ribosomal subunit protein bL31B (87 aa).

This sequence belongs to the bacterial ribosomal protein bL31 family. Type B subfamily. As to quaternary structure, part of the 50S ribosomal subunit.

The chain is Large ribosomal subunit protein bL31B from Klebsiella pneumoniae (strain 342).